The chain runs to 233 residues: Transcriptional regulatory protein NatR (233 aa).

The Response regulatory domain maps to 3-117 (KVGLVDDYRV…RLAASFDRYL (115 aa)). The residue at position 54 (D54) is a 4-aspartylphosphate. The region spanning 129–233 (ILIKQKSEMH…QLDYFQNYYF (105 aa)) is the HTH LytTR-type domain.

Phosphorylated by NatK.

The protein localises to the cytoplasm. Functionally, member of the two-component regulatory system NatK/NatR that positively regulates the expression of the natAB operon. Acts by binding directly to the promoter of natAB. The sequence is that of Transcriptional regulatory protein NatR from Bacillus subtilis (strain 168).